A 389-amino-acid chain; its full sequence is STE20-related kinase adapter protein alpha (389 aa).

The Protein kinase domain maps to 11 to 321 (YELLTIIGRG…AGALLNHPFF (311 aa)).

It belongs to the protein kinase superfamily. STE Ser/Thr protein kinase family. STE20 subfamily. Component of a trimeric complex composed of STK11/LKB1, STRAD (STRADA or STRADB) and CAB39/MO25 (CAB39/MO25alpha or CAB39L/MO25beta): the complex tethers STK11/LKB1 in the cytoplasm and stimulates its catalytic activity. In terms of tissue distribution, expressed in brain, hypothalamus, heart and skeletal muscle.

Its subcellular location is the nucleus. The protein resides in the cytoplasm. Pseudokinase which, in complex with CAB39/MO25 (CAB39/MO25alpha or CAB39L/MO25beta), binds to and activates STK11/LKB1. Adopts a closed conformation typical of active protein kinases and binds STK11/LKB1 as a pseudosubstrate, promoting conformational change of STK11/LKB1 in an active conformation. The polypeptide is STE20-related kinase adapter protein alpha (STRADA) (Gallus gallus (Chicken)).